The sequence spans 198 residues: MAGPRPVVLSGPSGAGKSTLLKKLFQEHSSIFGFSVSHTTRNPRPGEEDGKDYYFVTREMMQRDIAAGDFIEHAEFSGNLYGTSKEAVRAVQAMNRICVLDVDLQGVRSIKKTDLCPIYIFVQPPSLDVLEQRLRLRNTETEESLAKRLAAARTDMESSKEPGLFDLVIINDDLDKAYATLKQALSEEIKKAQGTGHA.

One can recognise a Guanylate kinase-like domain in the interval 4–186 (PRPVVLSGPS…AYATLKQALS (183 aa)). ATP is bound at residue 14 to 19 (GAGKST). 37–51 (SHTTRNPRPGEEDGK) is a substrate binding site. Residues Arg44, Arg137, and Arg148 contribute to the active site. 171 to 172 (ND) is an ATP binding site.

This sequence belongs to the guanylate kinase family. In terms of assembly, monomer. Interacts with RD3. Widely expressed. In retina is expressed in inner segment, outer nuclear layer, outer plexiform layer, inner plexiform layer, and ganglion cell layer (at protein level).

Its subcellular location is the photoreceptor inner segment. The protein resides in the cytoplasm. It is found in the cytosol. It localises to the mitochondrion. It catalyses the reaction GMP + ATP = GDP + ADP. Its function is as follows. Catalyzes the phosphorylation of GMP to GDP. Essential enzyme for recycling GMP and indirectly, cyclic GMP (cGMP). Involved in the cGMP metabolism in photoreceptors. The polypeptide is Guanylate kinase (Mus musculus (Mouse)).